We begin with the raw amino-acid sequence, 215 residues long: 3-demethoxyubiquinol 3-hydroxylase (215 aa).

Residues glutamate 64, glutamate 94, histidine 97, glutamate 146, glutamate 178, and histidine 181 each coordinate Fe cation.

This sequence belongs to the COQ7 family. It depends on Fe cation as a cofactor.

The protein resides in the cell membrane. The enzyme catalyses a 5-methoxy-2-methyl-3-(all-trans-polyprenyl)benzene-1,4-diol + AH2 + O2 = a 3-demethylubiquinol + A + H2O. It participates in cofactor biosynthesis; ubiquinone biosynthesis. In terms of biological role, catalyzes the hydroxylation of 2-nonaprenyl-3-methyl-6-methoxy-1,4-benzoquinol during ubiquinone biosynthesis. In Azotobacter vinelandii (strain DJ / ATCC BAA-1303), this protein is 3-demethoxyubiquinol 3-hydroxylase.